The following is a 20-amino-acid chain: Unknown protein NF003 from 2D-PAGE (20 aa).

The chain is Unknown protein NF003 from 2D-PAGE from Naegleria fowleri (Brain eating amoeba).